The following is a 674-amino-acid chain: MKYWLKKSSWLLAGSLLSTPLAMANEFSASFKGTDIQEFINIVGRNLEKTIIVDPSVRGKVDVRSFDTLNEEQYYSFFLSVLEVYGFAVVEMDNGVLKVIKSKDAKTSAIPVLSGEERANGDEVITQVVAVKNVSVRELSPLLRQLIDNAGAGNVVHYDPANIILITGRAAVVNRLAEIIRRVDQAGDKEIEVVELNNASAAEMVRIVEALNKTTDAQNTPEFLKPKFVADERTNSILISGDPKVRERLKRLIKQLDVEMAAKGNNRVVYLKYAKAEDLVEVLKGVSENLQAEKGTGQPTTSKRNEVMIAAHADTNSLVLTAPQDIMNAMLEVIGQLDIRRAQVLIEALIVEMAEGDGINLGVQWGSLESGSVIQYGNTGASIGNVMIGLEEAKDTTQTKAVYDTNNNFLRNETTTTKGDYTKLASALSSIQGAAVSIAMGDWTALINAVSNDSSSNILSSPSITVMDNGEASFIVGEEVPVITGSTAGSNNDNPFQTVDRKEVGIKLKVVPQINEGNSVQLNIEQEVSNVLGANGAVDVRFAKRQLNTSVMVQDGQMLVLGGLIDERALESESKVPLLGDIPLLGQLFRSTSSQVEKKNLMVFIKPTIIRDGVTADGITQRKYNYIRAEQLFRAEKGLRLLDDASVPVLPKFGDDRRHSPEIQAFIEQMEAKQ.

The N-terminal stretch at 1 to 24 is a signal peptide; that stretch reads MKYWLKKSSWLLAGSLLSTPLAMA. Positions 25 to 121 are N0; it reads NEFSASFKGT…VLSGEERANG (97 aa). An N1 region spans residues 123 to 187; it reads EVITQVVAVK…EIIRRVDQAG (65 aa). The interval 188 to 261 is N2; it reads DKEIEVVELN…LIKQLDVEMA (74 aa). Positions 264 to 338 are N3; the sequence is GNNRVVYLKY…AMLEVIGQLD (75 aa). Residues 343–612 are secretin; it reads QVLIEALIVE…VFIKPTIIRD (270 aa). A cap gate region spans residues 395-417; that stretch reads DTTQTKAVYDTNNNFLRNETTTT. The tract at residues 614-674 is s domain; the sequence is VTADGITQRK…AFIEQMEAKQ (61 aa).

Belongs to the bacterial secretin family. GSP D subfamily. As to quaternary structure, forms a cylindrical channel with 15 subunits; unlike E.coli no 16-subunit channels are seen. The closed pentadeacameric channels are 195 Angstroms long and 145 Angstroms in diameter. Each subunit turns in a clock-wise manner around the channel.

Its subcellular location is the cell outer membrane. In terms of biological role, involved in a type II secretion system (T2SS, formerly general secretion pathway, GSP) for the export of proteins. Required for secretion of cholera toxin through the outer membrane. This subunit forms the outer membrane channel. The polypeptide is Secretin GspD (epsD) (Vibrio cholerae serotype O1 (strain ATCC 39315 / El Tor Inaba N16961)).